A 102-amino-acid polypeptide reads, in one-letter code: Small ribosomal subunit protein bS6 (102 aa).

This sequence belongs to the bacterial ribosomal protein bS6 family.

Its function is as follows. Binds together with bS18 to 16S ribosomal RNA. The sequence is that of Small ribosomal subunit protein bS6 (rpsF) from Deinococcus radiodurans (strain ATCC 13939 / DSM 20539 / JCM 16871 / CCUG 27074 / LMG 4051 / NBRC 15346 / NCIMB 9279 / VKM B-1422 / R1).